The sequence spans 317 residues: Transaldolase (317 aa).

Catalysis depends on K132, which acts as the Schiff-base intermediate with substrate.

The protein belongs to the transaldolase family. Type 1 subfamily. In terms of assembly, homodimer.

The protein localises to the cytoplasm. It catalyses the reaction D-sedoheptulose 7-phosphate + D-glyceraldehyde 3-phosphate = D-erythrose 4-phosphate + beta-D-fructose 6-phosphate. It participates in carbohydrate degradation; pentose phosphate pathway; D-glyceraldehyde 3-phosphate and beta-D-fructose 6-phosphate from D-ribose 5-phosphate and D-xylulose 5-phosphate (non-oxidative stage): step 2/3. Its function is as follows. Transaldolase is important for the balance of metabolites in the pentose-phosphate pathway. In Photorhabdus laumondii subsp. laumondii (strain DSM 15139 / CIP 105565 / TT01) (Photorhabdus luminescens subsp. laumondii), this protein is Transaldolase.